We begin with the raw amino-acid sequence, 223 residues long: Glycerol-3-phosphate acyltransferase (223 aa).

Transmembrane regions (helical) follow at residues 2-22, 52-72, 78-98, 112-132, and 153-173; these read LEILWIALAYVLGSAPWGLVI, WGVATLLCDVLKGAVPVWLAF, PVFVSMVALACVLGHVFSCFM, IFLPLAFWQLLASSLLCMLVI, and LAVSGQWGWLPLSLAVWAVVV. The disordered stretch occupies residues 191 to 223; the sequence is WLKSKNKGAAAGNAAEGDDTQNMNPQDAGRKDG.

It belongs to the PlsY family. Probably interacts with PlsX.

The protein resides in the cell inner membrane. The enzyme catalyses an acyl phosphate + sn-glycerol 3-phosphate = a 1-acyl-sn-glycero-3-phosphate + phosphate. It functions in the pathway lipid metabolism; phospholipid metabolism. In terms of biological role, catalyzes the transfer of an acyl group from acyl-phosphate (acyl-PO(4)) to glycerol-3-phosphate (G3P) to form lysophosphatidic acid (LPA). This enzyme utilizes acyl-phosphate as fatty acyl donor, but not acyl-CoA or acyl-ACP. The polypeptide is Glycerol-3-phosphate acyltransferase (Desulfovibrio desulfuricans (strain ATCC 27774 / DSM 6949 / MB)).